Reading from the N-terminus, the 143-residue chain is Large ribosomal subunit protein uL11 (143 aa).

Belongs to the universal ribosomal protein uL11 family. In terms of assembly, part of the ribosomal stalk of the 50S ribosomal subunit. Interacts with L10 and the large rRNA to form the base of the stalk. L10 forms an elongated spine to which L12 dimers bind in a sequential fashion forming a multimeric L10(L12)X complex. One or more lysine residues are methylated.

In terms of biological role, forms part of the ribosomal stalk which helps the ribosome interact with GTP-bound translation factors. In Nitrosospira multiformis (strain ATCC 25196 / NCIMB 11849 / C 71), this protein is Large ribosomal subunit protein uL11.